A 410-amino-acid chain; its full sequence is Probable nicotinate phosphoribosyltransferase (410 aa).

Positions 15, 170, and 220 each coordinate nicotinate. H223 is subject to Phosphohistidine. T348 contacts 5-phospho-alpha-D-ribose 1-diphosphate.

This sequence belongs to the NAPRTase family. It depends on Mg(2+) as a cofactor. The cofactor is Mn(2+). In terms of processing, transiently phosphorylated on a His residue during the reaction cycle. Phosphorylation strongly increases the affinity for substrates and increases the rate of nicotinate D-ribonucleotide production. Dephosphorylation regenerates the low-affinity form of the enzyme, leading to product release.

It catalyses the reaction nicotinate + 5-phospho-alpha-D-ribose 1-diphosphate + ATP + H2O = nicotinate beta-D-ribonucleotide + ADP + phosphate + diphosphate. It participates in cofactor biosynthesis; NAD(+) biosynthesis; nicotinate D-ribonucleotide from nicotinate: step 1/1. Catalyzes the first step in the biosynthesis of NAD from nicotinic acid, the ATP-dependent synthesis of beta-nicotinate D-ribonucleotide from nicotinate and 5-phospho-D-ribose 1-phosphate. Helps prevent cellular oxidative stress via its role in NAD biosynthesis. The sequence is that of Probable nicotinate phosphoribosyltransferase from Schizosaccharomyces pombe (strain 972 / ATCC 24843) (Fission yeast).